The sequence spans 169 residues: Peptide methionine sulfoxide reductase MsrA (169 aa).

C10 is a catalytic residue.

Belongs to the MsrA Met sulfoxide reductase family.

The enzyme catalyses L-methionyl-[protein] + [thioredoxin]-disulfide + H2O = L-methionyl-(S)-S-oxide-[protein] + [thioredoxin]-dithiol. It catalyses the reaction [thioredoxin]-disulfide + L-methionine + H2O = L-methionine (S)-S-oxide + [thioredoxin]-dithiol. Its function is as follows. Has an important function as a repair enzyme for proteins that have been inactivated by oxidation. Catalyzes the reversible oxidation-reduction of methionine sulfoxide in proteins to methionine. This Streptococcus equi subsp. zooepidemicus (strain H70) protein is Peptide methionine sulfoxide reductase MsrA.